Here is a 222-residue protein sequence, read N- to C-terminus: Guanylate kinase (222 aa).

Residues 19–197 form the Guanylate kinase-like domain; that stretch reads GFLFILSSPS…SVSLIKSIYL (179 aa). 26-33 is an ATP binding site; sequence SPSGAGKS.

The protein belongs to the guanylate kinase family.

The protein resides in the cytoplasm. The enzyme catalyses GMP + ATP = GDP + ADP. Essential for recycling GMP and indirectly, cGMP. The protein is Guanylate kinase of Bartonella henselae (strain ATCC 49882 / DSM 28221 / CCUG 30454 / Houston 1) (Rochalimaea henselae).